An 84-amino-acid chain; its full sequence is Small ribosomal subunit protein uS15 (84 aa).

It belongs to the universal ribosomal protein uS15 family. In terms of assembly, part of the 30S ribosomal subunit. Forms a bridge to the 50S subunit in the 70S ribosome, contacting the 23S rRNA.

Functionally, one of the primary rRNA binding proteins, it binds directly to 16S rRNA where it helps nucleate assembly of the platform of the 30S subunit by binding and bridging several RNA helices of the 16S rRNA. Its function is as follows. Forms an intersubunit bridge (bridge B4) with the 23S rRNA of the 50S subunit in the ribosome. The chain is Small ribosomal subunit protein uS15 from Thermosipho melanesiensis (strain DSM 12029 / CIP 104789 / BI429).